A 441-amino-acid chain; its full sequence is Queuine tRNA-ribosyltransferase accessory subunit 2 (441 aa).

The Zn(2+) site is built by Cys307, Cys309, Cys312, and His338.

The protein belongs to the queuine tRNA-ribosyltransferase family. QTRT2 subfamily. Heterodimer of a catalytic subunit and an accessory subunit. It depends on Zn(2+) as a cofactor.

Its subcellular location is the cytoplasm. In terms of biological role, non-catalytic subunit of the queuine tRNA-ribosyltransferase (TGT) that catalyzes the base-exchange of a guanine (G) residue with queuine (Q) at position 34 (anticodon wobble position) in tRNAs with GU(N) anticodons (tRNA-Asp, -Asn, -His and -Tyr), resulting in the hypermodified nucleoside queuosine (7-(((4,5-cis-dihydroxy-2-cyclopenten-1-yl)amino)methyl)-7-deazaguanosine). The sequence is that of Queuine tRNA-ribosyltransferase accessory subunit 2 (qtr2) from Schizosaccharomyces pombe (strain 972 / ATCC 24843) (Fission yeast).